The primary structure comprises 508 residues: Transcriptional regulatory protein moc3 (508 aa).

The tract at residues 15–43 is disordered; the sequence is NRTGSINSNPLYIPNPNVEPTPKPTKRRT. The zn(2)-C6 fungal-type DNA-binding region spans 46-76; it reads GCLTCRRRRIKCDETKPFCLNCTKTNRECEG. 2 disordered regions span residues 110–146 and 174–193; these read ASSS…STVT and NHNV…KPSV. A compositionally biased stretch (low complexity) spans 176 to 193; the sequence is NVPTNNSSSATSSTKPSV.

As to quaternary structure, interacts with zfs1.

It localises to the nucleus. In terms of biological role, induces sexual development and ascus formation. Also involved in calcium homeostasis. This Schizosaccharomyces pombe (strain 972 / ATCC 24843) (Fission yeast) protein is Transcriptional regulatory protein moc3 (moc3).